The sequence spans 143 residues: Transcriptional regulator MraZ (143 aa).

SpoVT-AbrB domains lie at 5–47 and 76–119; these read EYQH…PLTE and AMEG…AKER.

Belongs to the MraZ family. As to quaternary structure, forms oligomers.

The protein localises to the cytoplasm. It is found in the nucleoid. This chain is Transcriptional regulator MraZ, found in Lactobacillus delbrueckii subsp. bulgaricus (strain ATCC 11842 / DSM 20081 / BCRC 10696 / JCM 1002 / NBRC 13953 / NCIMB 11778 / NCTC 12712 / WDCM 00102 / Lb 14).